The sequence spans 379 residues: Putative clathrin assembly protein At1g68110 (379 aa).

The ENTH domain occupies 26–158 (NSSYRNADLE…SFLSDQIHRL (133 aa)).

The protein resides in the membrane. It localises to the clathrin-coated pit. It is found in the golgi apparatus. Its subcellular location is the cytoplasmic vesicle. The protein localises to the clathrin-coated vesicle. In Arabidopsis thaliana (Mouse-ear cress), this protein is Putative clathrin assembly protein At1g68110.